Here is a 341-residue protein sequence, read N- to C-terminus: Putative UPF0607 protein ENSP00000381514 (341 aa).

Over residues 78-89 (AEEPKEATEVKD) the composition is skewed to basic and acidic residues. 2 disordered regions span residues 78 to 131 (AEEP…NPRP) and 216 to 282 (GLLT…KLPC). Positions 108–127 (EAASTSRPLETQGNLTSSWY) are enriched in polar residues. Residues 243-252 (AGHRSRKRKL) show a composition bias toward basic residues.

This sequence belongs to the UPF0607 family.

This is Putative UPF0607 protein ENSP00000381514 from Homo sapiens (Human).